A 506-amino-acid chain; its full sequence is Acetylcholine receptor subunit gamma (506 aa).

An N-terminal signal peptide occupies residues 1–17 (MVLTLLLIICLALEVRS). The Extracellular segment spans residues 18 to 235 (ENEEGRLIEK…IIFFLIIQRK (218 aa)). Residue Asn-85 is glycosylated (N-linked (GlcNAc...) asparagine). An intrachain disulfide couples Cys-145 to Cys-159. 3 helical membrane passes run 236-260 (PLFY…VYFL), 269-287 (CTLS…FLIA), and 303-324 (YLIF…VLNV). The Cytoplasmic portion of the chain corresponds to 325–466 (SLRTPNTHSL…WVLIGKVIDK (142 aa)). Tyr-381 is subject to Phosphotyrosine; by Tyr-kinases. A helical transmembrane segment spans residues 467–490 (ACFWIALLLFSIGTLAIFLTGHFN).

It belongs to the ligand-gated ion channel (TC 1.A.9) family. Acetylcholine receptor (TC 1.A.9.1) subfamily. Gamma/CHRNG sub-subfamily. Pentamer of two alpha chains, and one each of the beta, delta, and gamma chains. In terms of processing, seems not to be glycosylated on Asn-158.

The protein resides in the postsynaptic cell membrane. The protein localises to the cell membrane. The enzyme catalyses K(+)(in) = K(+)(out). The catalysed reaction is Na(+)(in) = Na(+)(out). Functionally, after binding acetylcholine, the AChR responds by an extensive change in conformation that affects all subunits and leads to opening of an ion-conducting channel across the plasma membrane. This is Acetylcholine receptor subunit gamma (CHRNG) from Tetronarce californica (Pacific electric ray).